Reading from the N-terminus, the 319-residue chain is ATP-dependent 6-phosphofructokinase (319 aa).

ATP is bound at residue glycine 11. 21-25 provides a ligand contact to ADP; that stretch reads RAVVR. Residues 72-73 and 102-105 contribute to the ATP site; these read RY and GDGS. Residue aspartate 103 coordinates Mg(2+). Residue 125–127 participates in substrate binding; it reads TID. Catalysis depends on aspartate 127, which acts as the Proton acceptor. An ADP-binding site is contributed by arginine 154. Residues arginine 162 and 169–171 contribute to the substrate site; that span reads MGR. ADP-binding positions include 185–187, arginine 211, and 213–215; these read GAE and KKH. Substrate is bound by residues glutamate 222, arginine 243, and 249–252; that span reads HVQR.

The protein belongs to the phosphofructokinase type A (PFKA) family. ATP-dependent PFK group I subfamily. Prokaryotic clade 'B1' sub-subfamily. Homotetramer. Mg(2+) serves as cofactor.

The protein localises to the cytoplasm. The catalysed reaction is beta-D-fructose 6-phosphate + ATP = beta-D-fructose 1,6-bisphosphate + ADP + H(+). It participates in carbohydrate degradation; glycolysis; D-glyceraldehyde 3-phosphate and glycerone phosphate from D-glucose: step 3/4. Its activity is regulated as follows. Allosterically activated by ADP and other diphosphonucleosides, and allosterically inhibited by phosphoenolpyruvate. In terms of biological role, catalyzes the phosphorylation of D-fructose 6-phosphate to fructose 1,6-bisphosphate by ATP, the first committing step of glycolysis. The protein is ATP-dependent 6-phosphofructokinase of Listeria monocytogenes serotype 4b (strain CLIP80459).